A 399-amino-acid polypeptide reads, in one-letter code: Accessory Sec system protein translocase subunit SecY2 (399 aa).

The next 10 helical transmembrane spans lie at 14–34 (IFFT…SIVS), 60–80 (LNIF…LTLI), 102–122 (ALTL…YINK), 128–148 (SNML…VWLA), 152–172 (TTYG…KSIF), 183–203 (ASLI…LFFI), 237–257 (ISIM…NFIG), 272–292 (FTNP…GYFL), 335–355 (WFGS…ALLV), and 362–382 (VYFT…AETI).

The protein belongs to the SecY/SEC61-alpha family. SecY2 subfamily. Component of the accessory SecA2/SecY2 protein translocase complex required to export cell wall proteins. May form heterotrimers with SecE and SecG subunits.

Its subcellular location is the cell membrane. Functionally, part of the accessory SecA2/SecY2 system specifically required for export of possible cell wall proteins. The central subunit of a protein translocation channel. The protein is Accessory Sec system protein translocase subunit SecY2 of Staphylococcus epidermidis (strain ATCC 12228 / FDA PCI 1200).